The following is a 334-amino-acid chain: Adenosine deaminase (334 aa).

The Zn(2+) site is built by His16 and His18. 3 residues coordinate substrate: His18, Asp20, and Gly173. His200 lines the Zn(2+) pocket. The active-site Proton donor is the Glu203. Asp281 is a binding site for Zn(2+).

The protein belongs to the metallo-dependent hydrolases superfamily. Adenosine and AMP deaminases family. Adenosine deaminase subfamily. Requires Zn(2+) as cofactor.

It catalyses the reaction adenosine + H2O + H(+) = inosine + NH4(+). The catalysed reaction is 2'-deoxyadenosine + H2O + H(+) = 2'-deoxyinosine + NH4(+). Functionally, catalyzes the hydrolytic deamination of adenosine and 2-deoxyadenosine. In Clostridium acetobutylicum (strain ATCC 824 / DSM 792 / JCM 1419 / IAM 19013 / LMG 5710 / NBRC 13948 / NRRL B-527 / VKM B-1787 / 2291 / W), this protein is Adenosine deaminase.